Here is a 385-residue protein sequence, read N- to C-terminus: Single-stranded DNA-binding protein 4 (385 aa).

Met1 carries the post-translational modification N-acetylmethionine. Residues 17–49 (AREKLALYVYEYLLHIGAQKSAQTFLSEIRWEK) enclose the LisH domain. 2 disordered regions span residues 122 to 287 (FQGP…NSSE) and 331 to 363 (GSGD…GEMA). Residues 245-263 (SPSGNSIPYSSSSPGSYTG) show a composition bias toward low complexity. A compositionally biased stretch (pro residues) spans 267 to 277 (GGGPPGTPIMP). Position 341 is a phosphoserine (Ser341). Thr355 bears the Phosphothreonine mark.

The protein localises to the nucleus. In Homo sapiens (Human), this protein is Single-stranded DNA-binding protein 4 (SSBP4).